The chain runs to 199 residues: MLRALRGAADLLSTALYKNEMMMSRRYLSTPAPEPAKPSSEETTESTEPATSVEDAGEPMKEKRITQPYSSEALTKLKLDQYPLYVEREWWKTGKRMTFWASWRQLRDVKRREQIQEVGADRMRLKAIKFNTILPQAIRDEAAEKMQKARKYDHPRLILNMCQFTGRQRGKIKPYRLSRHLFRRFADRSALSGVQRAMW.

The tract at residues Leu28 to Gln67 is disordered.

It belongs to the universal ribosomal protein uS14 family. In terms of assembly, component of the mitochondrial ribosome small subunit (28S) which comprises a 12S rRNA and about 30 distinct proteins. Interacts with LIAT1.

Its subcellular location is the mitochondrion. In Caenorhabditis elegans, this protein is Small ribosomal subunit protein uS14m (mrps-14).